The chain runs to 234 residues: Orotidine 5'-phosphate decarboxylase (234 aa).

Residues Asp10, Lys31, 58–67, Thr121, Arg183, Gln192, Gly212, and Arg213 each bind substrate; that span reads DLKLHDIPNT. Lys60 acts as the Proton donor in catalysis.

It belongs to the OMP decarboxylase family. Type 1 subfamily. As to quaternary structure, homodimer.

It catalyses the reaction orotidine 5'-phosphate + H(+) = UMP + CO2. It participates in pyrimidine metabolism; UMP biosynthesis via de novo pathway; UMP from orotate: step 2/2. Its function is as follows. Catalyzes the decarboxylation of orotidine 5'-monophosphate (OMP) to uridine 5'-monophosphate (UMP). This chain is Orotidine 5'-phosphate decarboxylase, found in Halalkalibacterium halodurans (strain ATCC BAA-125 / DSM 18197 / FERM 7344 / JCM 9153 / C-125) (Bacillus halodurans).